A 645-amino-acid chain; its full sequence is Acetyl-coenzyme A synthetase 2 (645 aa).

Residues 190–193 (RGGK), Thr-308, and Asn-332 each bind CoA. ATP-binding positions include 384 to 386 (GEP), 408 to 413 (DTWWQT), Asp-497, and Arg-512. CoA is bound at residue Ser-520. Arg-523 contacts ATP. 3 residues coordinate Mg(2+): Val-534, His-536, and Val-539. At Lys-606 the chain carries N6-acetyllysine.

The protein belongs to the ATP-dependent AMP-binding enzyme family. It depends on Mg(2+) as a cofactor. Acetylated. Deacetylation by the SIR2-homolog deacetylase activates the enzyme.

The catalysed reaction is acetate + ATP + CoA = acetyl-CoA + AMP + diphosphate. In terms of biological role, catalyzes the conversion of acetate into acetyl-CoA (AcCoA), an essential intermediate at the junction of anabolic and catabolic pathways. AcsA undergoes a two-step reaction. In the first half reaction, AcsA combines acetate with ATP to form acetyl-adenylate (AcAMP) intermediate. In the second half reaction, it can then transfer the acetyl group from AcAMP to the sulfhydryl group of CoA, forming the product AcCoA. The chain is Acetyl-coenzyme A synthetase 2 from Pseudomonas aeruginosa (strain ATCC 15692 / DSM 22644 / CIP 104116 / JCM 14847 / LMG 12228 / 1C / PRS 101 / PAO1).